We begin with the raw amino-acid sequence, 313 residues long: Bifunctional pinoresinol-lariciresinol reductase 1 (313 aa).

Residues 11–17 (GGTGYIG), R36, and K45 each bind NADP(+). The active-site Proton acceptor is K138. R142 is a binding site for NADP(+). H271 contacts substrate.

The protein belongs to the NmrA-type oxidoreductase family. Isoflavone reductase subfamily. As to quaternary structure, dimer.

It catalyses the reaction (+)-lariciresinol + NADP(+) = (+)-pinoresinol + NADPH + H(+). The enzyme catalyses (-)-lariciresinol + NADP(+) = (-)-pinoresinol + NADPH + H(+). It carries out the reaction (+)-secoisolariciresinol + NADP(+) = (-)-lariciresinol + NADPH + H(+). Its function is as follows. Reductase involved in lignan biosynthesis. Catalyzes the enantioselective sequential conversion of (-)-pinoresinol into (-)-lariciresinol and of (-)-lariciresinol into (+)-secoisolariciresinol. Can also convert with a lower efficiency (+)-pinoresinol into (+)-lariciresinol, but not (+)-lariciresinol into (-)-secoisolariciresinol. Abstracts the 4R-hydride from the NADPH cofactor during catalysis. This chain is Bifunctional pinoresinol-lariciresinol reductase 1 (PLR_Tp1), found in Thuja plicata (Western red-cedar).